Reading from the N-terminus, the 180-residue chain is Chorion protein S19 (180 aa).

An N-terminal signal peptide occupies residues 1-21 (MNTFATLAVLFCACLIGNCHG).

It belongs to the chorion protein S19 family.

Its subcellular location is the secreted. Chorion membrane (egg shell) protein; plays a role in protecting the egg from the environment. In Drosophila subobscura (Fruit fly), this protein is Chorion protein S19 (Cp19).